Here is a 226-residue protein sequence, read N- to C-terminus: Glutathione peroxidase 3 (226 aa).

An N-terminal signal peptide occupies residues 1 to 24 (MARLLQASCLLSLLLAGFLPQSRG). Residue Sec-73 is part of the active site. Position 73 (Sec-73) is a non-standard amino acid, selenocysteine.

This sequence belongs to the glutathione peroxidase family. In terms of assembly, homotetramer. In terms of tissue distribution, expressed intensively in the kidney and adrenal gland, and weakly in the cerebellum, heart, and lung. Secreted in plasma.

The protein localises to the secreted. It carries out the reaction 2 glutathione + H2O2 = glutathione disulfide + 2 H2O. The enzyme catalyses tert-butyl hydroperoxide + 2 glutathione = tert-butanol + glutathione disulfide + H2O. Functionally, protects cells and enzymes from oxidative damage, by catalyzing the reduction of hydrogen peroxide, lipid peroxides and organic hydroperoxide, by glutathione. The polypeptide is Glutathione peroxidase 3 (Macaca fuscata fuscata (Japanese macaque)).